We begin with the raw amino-acid sequence, 292 residues long: Syntaxin-19 (292 aa).

Positions 1 to 24 (MKDRLPELKQRTKETELSKDKDVP) are enriched in basic and acidic residues. The tract at residues 1 to 28 (MKDRLPELKQRTKETELSKDKDVPTTEA) is disordered. Residues 46–122 (VAERHLHEIQ…VKEVKKSEDE (77 aa)) adopt a coiled-coil conformation. Residues 209-271 (LSEIEQRHKE…NTTKEKFGLA (63 aa)) form the t-SNARE coiled-coil homology domain.

It belongs to the syntaxin family. Interacts with EGFR.

It is found in the cell membrane. The protein localises to the cytoplasm. In terms of biological role, plays a role in endosomal trafficking of the epidermal growth factor receptor (EGFR). The polypeptide is Syntaxin-19 (STX19) (Bos taurus (Bovine)).